A 298-amino-acid polypeptide reads, in one-letter code: KH domain-containing protein At1g09660/At1g09670 (298 aa).

The KH domain maps to 152–219 (DVPVDKYPSY…EHLCEPLHVL (68 aa)). Residues 266 to 298 (NGTLREESPSPSLSPCLSPSMSPFNSKRAKTEI) form a disordered region. A phosphoserine mark is found at serine 273 and serine 287. The segment covering 274-288 (PSPSLSPCLSPSMSP) has biased composition (low complexity).

It is found in the nucleus. This is KH domain-containing protein At1g09660/At1g09670 from Arabidopsis thaliana (Mouse-ear cress).